A 138-amino-acid polypeptide reads, in one-letter code: Nucleoside diphosphate kinase (138 aa).

ATP-binding residues include lysine 9, phenylalanine 57, arginine 85, threonine 91, arginine 102, and asparagine 112. Histidine 120 functions as the Pros-phosphohistidine intermediate in the catalytic mechanism.

The protein belongs to the NDK family. In terms of assembly, homotetramer. Requires Mg(2+) as cofactor.

The protein localises to the cytoplasm. It carries out the reaction a 2'-deoxyribonucleoside 5'-diphosphate + ATP = a 2'-deoxyribonucleoside 5'-triphosphate + ADP. The catalysed reaction is a ribonucleoside 5'-diphosphate + ATP = a ribonucleoside 5'-triphosphate + ADP. Functionally, major role in the synthesis of nucleoside triphosphates other than ATP. The ATP gamma phosphate is transferred to the NDP beta phosphate via a ping-pong mechanism, using a phosphorylated active-site intermediate. The chain is Nucleoside diphosphate kinase from Streptococcus agalactiae serotype V (strain ATCC BAA-611 / 2603 V/R).